The chain runs to 280 residues: Fructose-1,6-bisphosphatase class 1 (280 aa).

Mg(2+) contacts are provided by Glu-64, Asp-83, Leu-85, and Asp-86. Residues 86-89 (DGSS), Tyr-189, and Lys-220 each bind substrate. Residue Glu-226 participates in Mg(2+) binding.

Belongs to the FBPase class 1 family. Homotetramer. The cofactor is Mg(2+).

It is found in the cytoplasm. It catalyses the reaction beta-D-fructose 1,6-bisphosphate + H2O = beta-D-fructose 6-phosphate + phosphate. It participates in carbohydrate biosynthesis; gluconeogenesis. The sequence is that of Fructose-1,6-bisphosphatase class 1 from Campylobacter jejuni subsp. doylei (strain ATCC BAA-1458 / RM4099 / 269.97).